The sequence spans 110 residues: UPF0060 membrane protein MMAR_2961 (110 aa).

4 consecutive transmembrane segments (helical) span residues 6–26, 32–52, 61–81, and 90–110; these read ILLFIVAAVAEIGGAWLVWQG, GLAWIGAGVIALGLYGFVATL, ILAAYGGIFVAGSLLWGMAFD, and IVGALVCLAGVGVIMYAPRAH.

The protein belongs to the UPF0060 family.

The protein localises to the cell membrane. The chain is UPF0060 membrane protein MMAR_2961 from Mycobacterium marinum (strain ATCC BAA-535 / M).